The primary structure comprises 832 residues: Envelope glycoprotein gp160 (832 aa).

An N-terminal signal peptide occupies residues 1–31 (MRVRGMQRNWQHLGKWGLLFLGILIICNAAD). Residues 32–660 (NLWVTVYYGV…ISNWLWYIKI (629 aa)) are Extracellular-facing. Cysteine 53 and cysteine 73 are disulfide-bonded. N-linked (GlcNAc...) asparagine; by host glycosylation is found at asparagine 87, asparagine 129, asparagine 132, asparagine 135, asparagine 146, asparagine 150, asparagine 177, asparagine 178, asparagine 188, asparagine 225, asparagine 232, asparagine 253, asparagine 267, asparagine 280, asparagine 286, asparagine 292, asparagine 322, asparagine 329, asparagine 345, and asparagine 352. Disulfide bonds link cysteine 118–cysteine 196, cysteine 125–cysteine 187, cysteine 130–cysteine 147, cysteine 209–cysteine 238, and cysteine 219–cysteine 230. The segment at 130–146 (CTNATNNSQEKPGAMQN) is V1. The V2 stretch occupies residues 147–187 (CSFNMTTEVRDKKLKLSALFYRLDIVPIGNNNSSEYRLINC). A V3 region spans residues 287–320 (CTRPNNNTRKGIHLGPGQTFYATGAIIGDIRKAH). Cysteines 287 and 321 form a disulfide. The segment at 354–364 (SSGGDLEITMH) is CD4-binding loop. Disulfide bonds link cysteine 368/cysteine 422 and cysteine 375/cysteine 395. A V4 region spans residues 375-395 (CDTSGLFNDTGSNNGTITLPC). N-linked (GlcNAc...) asparagine; by host glycosylation is found at asparagine 382, asparagine 388, asparagine 419, asparagine 425, and asparagine 437. A V5 region spans residues 438 to 447 (ESNIETFRPE). A fusion peptide region spans residues 488 to 508 (AAGLGALFLGFLGDSREHMGA). The tract at residues 550–568 (KQLQARVLAVERYLKDQQL) is immunosuppression. The cysteines at positions 574 and 580 are disulfide-linked. N-linked (GlcNAc...) asparagine; by host glycans are attached at residues asparagine 587, asparagine 592, asparagine 601, and asparagine 613. The stretch at 609–643 (KEISNYSNIIYKLIEESQNQQEKNEQELLALDKWA) forms a coiled coil. Residues 638-659 (ALDKWASLWNWFDISNWLWYIK) are MPER; binding to GalCer. Residues 661 to 681 (FIMIVGGLIGLRIVFAVLSIV) traverse the membrane as a helical segment. The Cytoplasmic segment spans residues 682–832 (NRVRKGYSPL…IRQGAERALL (151 aa)). A YXXL motif; contains endocytosis signal motif is present at residues 688 to 691 (YSPL). The interval 695–717 (TLIPSPRGPDRPEGIEEGGGEQG) is disordered. Cysteine 740 is lipidated: S-palmitoyl cysteine; by host. The Di-leucine internalization motif motif lies at 831-832 (LL).

It belongs to the HIV-1 env protein family. The mature envelope protein (Env) consists of a homotrimer of non-covalently associated gp120-gp41 heterodimers. The resulting complex protrudes from the virus surface as a spike. There seems to be as few as 10 spikes on the average virion. Interacts with host CD4, CCR5 and CXCR4. Gp120 also interacts with the C-type lectins CD209/DC-SIGN and CLEC4M/DC-SIGNR (collectively referred to as DC-SIGN(R)). Gp120 and gp41 interact with GalCer. Gp120 interacts with host ITGA4/ITGB7 complex; on CD4+ T-cells, this interaction results in rapid activation of integrin ITGAL/LFA-1, which facilitates efficient cell-to-cell spreading of HIV-1. Gp120 interacts with cell-associated heparan sulfate; this interaction increases virus infectivity on permissive cells and may be involved in infection of CD4- cells. As to quaternary structure, the mature envelope protein (Env) consists of a homotrimer of non-covalently associated gp120-gp41 heterodimers. The resulting complex protrudes from the virus surface as a spike. There seems to be as few as 10 spikes on the average virion. Highly glycosylated by host. The high number of glycan on the protein is reffered to as 'glycan shield' because it contributes to hide protein sequence from adaptive immune system. In terms of processing, palmitoylation of the transmembrane protein and of Env polyprotein (prior to its proteolytic cleavage) is essential for their association with host cell membrane lipid rafts. Palmitoylation is therefore required for envelope trafficking to classical lipid rafts, but not for viral replication. Post-translationally, specific enzymatic cleavages in vivo yield mature proteins. Envelope glycoproteins are synthesized as an inactive precursor that is heavily N-glycosylated and processed likely by host cell furin in the Golgi to yield the mature SU and TM proteins. The cleavage site between SU and TM requires the minimal sequence [KR]-X-[KR]-R. About 2 of the 9 disulfide bonds of gp41 are reduced by P4HB/PDI, following binding to CD4 receptor.

It is found in the virion membrane. The protein localises to the host cell membrane. Its subcellular location is the host endosome membrane. In terms of biological role, oligomerizes in the host endoplasmic reticulum into predominantly trimers. In a second time, gp160 transits in the host Golgi, where glycosylation is completed. The precursor is then proteolytically cleaved in the trans-Golgi and thereby activated by cellular furin or furin-like proteases to produce gp120 and gp41. Its function is as follows. Attaches the virus to the host lymphoid cell by binding to the primary receptor CD4. This interaction induces a structural rearrangement creating a high affinity binding site for a chemokine coreceptor like CXCR4 and/or CCR5. Acts as a ligand for CD209/DC-SIGN and CLEC4M/DC-SIGNR, which are respectively found on dendritic cells (DCs), and on endothelial cells of liver sinusoids and lymph node sinuses. These interactions allow capture of viral particles at mucosal surfaces by these cells and subsequent transmission to permissive cells. HIV subverts the migration properties of dendritic cells to gain access to CD4+ T-cells in lymph nodes. Virus transmission to permissive T-cells occurs either in trans (without DCs infection, through viral capture and transmission), or in cis (following DCs productive infection, through the usual CD4-gp120 interaction), thereby inducing a robust infection. In trans infection, bound virions remain infectious over days and it is proposed that they are not degraded, but protected in non-lysosomal acidic organelles within the DCs close to the cell membrane thus contributing to the viral infectious potential during DCs' migration from the periphery to the lymphoid tissues. On arrival at lymphoid tissues, intact virions recycle back to DCs' cell surface allowing virus transmission to CD4+ T-cells. Acts as a class I viral fusion protein. Under the current model, the protein has at least 3 conformational states: pre-fusion native state, pre-hairpin intermediate state, and post-fusion hairpin state. During fusion of viral and target intracellular membranes, the coiled coil regions (heptad repeats) assume a trimer-of-hairpins structure, positioning the fusion peptide in close proximity to the C-terminal region of the ectodomain. The formation of this structure appears to drive apposition and subsequent fusion of viral and target cell membranes. Complete fusion occurs in host cell endosomes and is dynamin-dependent, however some lipid transfer might occur at the plasma membrane. The virus undergoes clathrin-dependent internalization long before endosomal fusion, thus minimizing the surface exposure of conserved viral epitopes during fusion and reducing the efficacy of inhibitors targeting these epitopes. Membranes fusion leads to delivery of the nucleocapsid into the cytoplasm. The chain is Envelope glycoprotein gp160 from Human immunodeficiency virus type 1 group M subtype F1 (isolate VI850) (HIV-1).